Here is a 560-residue protein sequence, read N- to C-terminus: Dihydroxy-acid dehydratase (560 aa).

The segment at 1-20 (MGDNLKKRSSMTTDGDNRAP) is disordered. Cys-52 serves as a coordination point for [2Fe-2S] cluster. Asp-84 lines the Mg(2+) pocket. Cys-125 provides a ligand contact to [2Fe-2S] cluster. Mg(2+) is bound by residues Asp-126 and Lys-127. Lys-127 is modified (N6-carboxylysine). Cys-197 contacts [2Fe-2S] cluster. Residue Glu-448 coordinates Mg(2+). The Proton acceptor role is filled by Ser-474.

This sequence belongs to the IlvD/Edd family. As to quaternary structure, homodimer. The cofactor is [2Fe-2S] cluster. It depends on Mg(2+) as a cofactor.

It catalyses the reaction (2R)-2,3-dihydroxy-3-methylbutanoate = 3-methyl-2-oxobutanoate + H2O. The catalysed reaction is (2R,3R)-2,3-dihydroxy-3-methylpentanoate = (S)-3-methyl-2-oxopentanoate + H2O. The protein operates within amino-acid biosynthesis; L-isoleucine biosynthesis; L-isoleucine from 2-oxobutanoate: step 3/4. It participates in amino-acid biosynthesis; L-valine biosynthesis; L-valine from pyruvate: step 3/4. In terms of biological role, functions in the biosynthesis of branched-chain amino acids. Catalyzes the dehydration of (2R,3R)-2,3-dihydroxy-3-methylpentanoate (2,3-dihydroxy-3-methylvalerate) into 2-oxo-3-methylpentanoate (2-oxo-3-methylvalerate) and of (2R)-2,3-dihydroxy-3-methylbutanoate (2,3-dihydroxyisovalerate) into 2-oxo-3-methylbutanoate (2-oxoisovalerate), the penultimate precursor to L-isoleucine and L-valine, respectively. The protein is Dihydroxy-acid dehydratase of Leptospira interrogans serogroup Icterohaemorrhagiae serovar copenhageni (strain Fiocruz L1-130).